The primary structure comprises 543 residues: Glucose-6-phosphate isomerase (543 aa).

Residue Glu353 is the Proton donor of the active site. Catalysis depends on residues His384 and Lys504.

It belongs to the GPI family.

The protein localises to the cytoplasm. The catalysed reaction is alpha-D-glucose 6-phosphate = beta-D-fructose 6-phosphate. Its pathway is carbohydrate biosynthesis; gluconeogenesis. It functions in the pathway carbohydrate degradation; glycolysis; D-glyceraldehyde 3-phosphate and glycerone phosphate from D-glucose: step 2/4. Its function is as follows. Catalyzes the reversible isomerization of glucose-6-phosphate to fructose-6-phosphate. The protein is Glucose-6-phosphate isomerase of Roseiflexus sp. (strain RS-1).